The primary structure comprises 354 residues: Eukaryotic translation initiation factor 3 subunit H (354 aa).

The interval 1–28 (MATRQPYQKKFQSRDQREQTSSQQAPNS) is disordered. Positions 19–28 (QTSSQQAPNS) are enriched in polar residues. The MPN domain occupies 33–174 (VTVDALVVMK…LSAFRLSNKA (142 aa)).

This sequence belongs to the eIF-3 subunit H family. In terms of assembly, component of the eukaryotic translation initiation factor 3 (eIF-3) complex.

It is found in the cytoplasm. Component of the eukaryotic translation initiation factor 3 (eIF-3) complex, which is involved in protein synthesis of a specialized repertoire of mRNAs and, together with other initiation factors, stimulates binding of mRNA and methionyl-tRNAi to the 40S ribosome. The eIF-3 complex specifically targets and initiates translation of a subset of mRNAs involved in cell proliferation. In Monosiga brevicollis (Choanoflagellate), this protein is Eukaryotic translation initiation factor 3 subunit H.